We begin with the raw amino-acid sequence, 312 residues long: Elongation factor Ts (312 aa).

The interval 80-83 is involved in Mg(2+) ion dislocation from EF-Tu; the sequence is TDFV.

The protein belongs to the EF-Ts family.

The protein resides in the cytoplasm. Its function is as follows. Associates with the EF-Tu.GDP complex and induces the exchange of GDP to GTP. It remains bound to the aminoacyl-tRNA.EF-Tu.GTP complex up to the GTP hydrolysis stage on the ribosome. This chain is Elongation factor Ts, found in Maricaulis maris (strain MCS10) (Caulobacter maris).